A 501-amino-acid polypeptide reads, in one-letter code: Solute carrier family 2, facilitated glucose transporter member 5 (501 aa).

Methionine 1 carries the post-translational modification N-acetylmethionine. Over 1–18 the chain is Cytoplasmic; the sequence is MEPQDPVKREGRLTPVIV. The helical transmembrane segment at 19–39 threads the bilayer; it reads LATLIAAFGSSFQYGYNVAAI. Tyrosine 32 contacts D-fructose. Residues 40 to 68 are Extracellular-facing; the sequence is NSPSEFMKDFYNYTYYDRVGEYMNEFYLT. Asparagine 51 carries N-linked (GlcNAc...) asparagine glycosylation. Residues 69–91 form a helical membrane-spanning segment; that stretch reads LLWSVTVSMFPFGGFLGSLMVGP. The Cytoplasmic portion of the chain corresponds to 92–98; sequence LVNNLGR. The helical transmembrane segment at 99–119 threads the bilayer; sequence KGTLLFNNIFSIVPALLMGFS. Topologically, residues 120–126 are extracellular; the sequence is ELAKSFE. Residues 127-149 form a helical membrane-spanning segment; it reads MIIVARVLVGICAGLSSNVVPMY. The Cytoplasmic segment spans residues 150–161; sequence LGELAPKNWRGA. Residues 162–182 traverse the membrane as a helical segment; it reads LGVVPQLFITIGILVAQIFGL. Position 167 (glutamine 167) interacts with D-fructose. The Extracellular portion of the chain corresponds to 183-192; sequence RSLLANEEGW. A helical transmembrane segment spans residues 193–213; the sequence is PILLGLTGIPAVLQLLFLPFF. Over 214 to 277 the chain is Cytoplasmic; the sequence is PESPRYLLIQ…LFKMRSLRWQ (64 aa). The chain crosses the membrane as a helical span at residues 278-298; that stretch reads VISIIVLMAGQQLSGVNAIYY. D-fructose contacts are provided by residues glutamine 288 and 296-298; that span reads IYY. Residues 299–313 are Extracellular-facing; sequence YADQIYLSAGVNEDD. A helical transmembrane segment spans residues 314 to 334; that stretch reads VQYVTAGTGAVNVLITVCAIF. The Cytoplasmic portion of the chain corresponds to 335 to 342; the sequence is VVELMGRR. Residues 343–363 traverse the membrane as a helical segment; that stretch reads FLLLLGFSVCFTACCVLTGAL. Residues 364-371 are Extracellular-facing; sequence ALQDVISW. The chain crosses the membrane as a helical span at residues 372–394; the sequence is MPYVSIACVISYVIGHALGPSPI. Position 387 (histidine 387) interacts with D-fructose. At 395 to 412 the chain is on the cytoplasmic side; the sequence is PALLVTEIFLQSSRPAAY. Residues 413–433 traverse the membrane as a helical segment; the sequence is MVAGTVHWLSNFTVGLVFPFI. 419–420 is a binding site for D-fructose; the sequence is HW. The Extracellular portion of the chain corresponds to 434-439; that stretch reads QVGLGA. Residues 440–460 form a helical membrane-spanning segment; sequence YSFVIFAVICLLTTVYIFLII. At 461–501 the chain is on the cytoplasmic side; it reads PETKSKTFIEINRIFIKMNKVPGVHPEKEELKEFPPSTARQ.

This sequence belongs to the major facilitator superfamily. Sugar transporter (TC 2.A.1.1) family. Glucose transporter subfamily.

It localises to the apical cell membrane. Its subcellular location is the cell membrane. The protein localises to the sarcolemma. The catalysed reaction is D-fructose(out) = D-fructose(in). Its function is as follows. Functions as a fructose transporter that has only low activity with other monosaccharides. Can mediate the uptake of deoxyglucose, but with low efficiency. Essential for fructose uptake in the small intestine. Plays a role in the regulation of salt uptake and blood pressure in response to dietary fructose. Required for the development of high blood pressure in response to high dietary fructose intake. This is Solute carrier family 2, facilitated glucose transporter member 5 from Bos taurus (Bovine).